We begin with the raw amino-acid sequence, 384 residues long: Spermidine/putrescine import ATP-binding protein PotA (384 aa).

The 233-residue stretch at 6–238 folds into the ABC transporter domain; sequence ITFNNVSKTF…PINHFVANFI (233 aa). 40 to 47 is an ATP binding site; it reads GASGSGKS.

This sequence belongs to the ABC transporter superfamily. Spermidine/putrescine importer (TC 3.A.1.11.1) family. As to quaternary structure, the complex is composed of two ATP-binding proteins (PotA), two transmembrane proteins (PotB and PotC) and a solute-binding protein (PotD).

The protein resides in the cell membrane. It catalyses the reaction ATP + H2O + polyamine-[polyamine-binding protein]Side 1 = ADP + phosphate + polyamineSide 2 + [polyamine-binding protein]Side 1.. Functionally, part of the ABC transporter complex PotABCD involved in spermidine/putrescine import. Responsible for energy coupling to the transport system. This is Spermidine/putrescine import ATP-binding protein PotA from Streptococcus pyogenes serotype M28 (strain MGAS6180).